The primary structure comprises 441 residues: Arginine biosynthesis bifunctional protein ArgJ, mitochondrial (441 aa).

Residues T178, K204, T215, E304, N436, and S441 each contribute to the substrate site. The active-site Nucleophile is the T215.

Belongs to the ArgJ family. Heterodimer of an alpha and a beta chain. In terms of processing, the alpha and beta chains are autoproteolytically processed from a single precursor protein within the mitochondrion.

The protein resides in the mitochondrion matrix. The enzyme catalyses N(2)-acetyl-L-ornithine + L-glutamate = N-acetyl-L-glutamate + L-ornithine. It catalyses the reaction L-glutamate + acetyl-CoA = N-acetyl-L-glutamate + CoA + H(+). It functions in the pathway amino-acid biosynthesis; L-arginine biosynthesis; L-ornithine and N-acetyl-L-glutamate from L-glutamate and N(2)-acetyl-L-ornithine (cyclic): step 1/1. The protein operates within amino-acid biosynthesis; L-arginine biosynthesis; N(2)-acetyl-L-ornithine from L-glutamate: step 1/4. Catalyzes two activities which are involved in the cyclic version of arginine biosynthesis: the synthesis of acetylglutamate from glutamate and acetyl-CoA, and of ornithine by transacetylation between acetylornithine and glutamate. The protein is Arginine biosynthesis bifunctional protein ArgJ, mitochondrial of Lodderomyces elongisporus (strain ATCC 11503 / CBS 2605 / JCM 1781 / NBRC 1676 / NRRL YB-4239) (Yeast).